The following is a 163-amino-acid chain: NADH-quinone oxidoreductase subunit I (163 aa).

2 consecutive 4Fe-4S ferredoxin-type domains span residues 55–84 (RRYP…IDAE) and 94–123 (TRYD…EGPN). Positions 64, 67, 70, 74, 103, 106, 109, and 113 each coordinate [4Fe-4S] cluster.

It belongs to the complex I 23 kDa subunit family. In terms of assembly, NDH-1 is composed of 14 different subunits. Subunits NuoA, H, J, K, L, M, N constitute the membrane sector of the complex. [4Fe-4S] cluster serves as cofactor.

It is found in the cell inner membrane. The catalysed reaction is a quinone + NADH + 5 H(+)(in) = a quinol + NAD(+) + 4 H(+)(out). In terms of biological role, NDH-1 shuttles electrons from NADH, via FMN and iron-sulfur (Fe-S) centers, to quinones in the respiratory chain. The immediate electron acceptor for the enzyme in this species is believed to be ubiquinone. Couples the redox reaction to proton translocation (for every two electrons transferred, four hydrogen ions are translocated across the cytoplasmic membrane), and thus conserves the redox energy in a proton gradient. The sequence is that of NADH-quinone oxidoreductase subunit I (nuoI) from Rhodobacter capsulatus (Rhodopseudomonas capsulata).